The primary structure comprises 501 residues: Pentatricopeptide repeat-containing protein At2g36730 (501 aa).

PPR repeat units follow at residues 77–111, 112–146, 147–177, 178–212, 213–243, 246–276, 277–312, 313–343, and 349–379; these read TPST…GIKP, NKLT…GFDF, DVYV…MTER, NVVS…RFCP, DETT…VREL, NCRL…MVDK, NVWT…SVRP, NYVT…MEKI, and MMIH…MPFE. The interval 384 to 462 is type E motif; the sequence is VWRTLLSACS…IAGESCLELG (79 aa). Residues 463–493 are type E(+) motif; that stretch reads GSFHRFFSGYDPRSEYVSIYELLDLFKFQLT.

Belongs to the PPR family. PCMP-E subfamily.

The sequence is that of Pentatricopeptide repeat-containing protein At2g36730 (PCMP-E44) from Arabidopsis thaliana (Mouse-ear cress).